The primary structure comprises 328 residues: MGATGDTEQPRGPGGAERGGLELGDAGAAGQPVLTNPWNIMIKHRQVQRRGRRSQMTTSFTDPAISMDLLRAVLQPSINEEIQGVFNKYMKFFQKAALNVRDNVGEEVDAEQLIQEACRSCLEQAKLLFSDGEKVIPRLAHELPGIKRGRQAEEESHRGSPIPKKRKGRPPGHVLSNDRAAAGMVWKQKSCEPIRREGPKWDPARLNESTTFVLGSRANKALGMGGTRGRIYIKHPHLFKYAADPQDKHWLAEQHHMRATGGKMAYLLIEEDIRDLAASDDYRGCLDLKLEELKSFVLPSWMVEKMRKYMETLRTENEHRAAEAPPQT.

Disordered regions lie at residues 1–30 (MGATGDTEQPRGPGGAERGGLELGDAGAAG) and 142–176 (ELPGIKRGRQAEEESHRGSPIPKKRKGRPPGHVLS). The span at 12–22 (GPGGAERGGLE) shows a compositional bias: gly residues. The segment at 56-147 (MTTSFTDPAI…RLAHELPGIK (92 aa)) is important for dimerization. Positions 142 to 158 (ELPGIKRGRQAEEESHR) are enriched in basic and acidic residues. Positions 158 to 172 (RGSPIPKKRKGRPPG) form a DNA-binding region, a.T hook. Phosphoserine is present on S160. A Nuclear localization signal motif is present at residues 163-169 (PKKRKGR). The segment at 196-315 (REGPKWDPAR…MRKYMETLRT (120 aa)) is important for DNA and nucleosome binding. Residues 215-236 (GSRANKALGMGGTRGRIYIKHP) constitute a DNA-binding region (H-T-H motif).

As to quaternary structure, monomer and homodimer. A minor proportion may form homotrimers. Interacts with ZNF541. Interacts with the terminal deoxynucleotidyltransferase DNTT. Interacts with TRERF1. Identified in a histone deacetylase complex that contains DNTTIP1, HDAC1 and MIDEAS; this complex assembles into a tetramer that contains four copies of each protein chain. Component of a histone deacetylase complex containing DNTTIP1, ZNF541, HDAC1 and HDAC2. Identified in a complex with KCTD19, HDAC1, HDAC2 and ZNF541.

The protein localises to the nucleus. Increases DNTT terminal deoxynucleotidyltransferase activity (in vitro). Also acts as a transcriptional regulator, binding to the consensus sequence 5'-GNTGCATG-3' following an AT-tract. Associates with RAB20 promoter and positively regulates its transcription. Binds DNA and nucleosomes; may recruit HDAC1 complexes to nucleosomes or naked DNA. The sequence is that of Deoxynucleotidyltransferase terminal-interacting protein 1 (Dnttip1) from Mus musculus (Mouse).